Here is a 279-residue protein sequence, read N- to C-terminus: MAFIQEIKRRMNTVKSTIKITNAMKMVSRAKFIKFKKQFQEISLFFNEFYKAVGQVVVSLKEPKKKPDNQKTLWIMMSSSLGLCGQHNSNMNKLLKANFKADDKIFFLGRKNQSFWNKNSQYNPAVGFIDIQDRDINFDYCQTIFDQIMDAFKEFKLDRICMVYTKFKNSLIQQSQLFQVFPFDVETFKTLNPVVTDQQLDFEPDQATIINLITPQFFDVALYGGLVETKLCESASRQNAMEAATKNAKDLLDKYTLQFNKLRQNSITEEIIEVIGGMN.

The protein belongs to the ATPase gamma chain family. In terms of assembly, F-type ATPases have 2 components, CF(1) - the catalytic core - and CF(0) - the membrane proton channel. CF(1) has five subunits: alpha(3), beta(3), gamma(1), delta(1), epsilon(1). CF(0) has three main subunits: a, b and c.

The protein resides in the cell membrane. Produces ATP from ADP in the presence of a proton gradient across the membrane. The gamma chain is believed to be important in regulating ATPase activity and the flow of protons through the CF(0) complex. The sequence is that of ATP synthase gamma chain from Mycoplasma genitalium (strain ATCC 33530 / DSM 19775 / NCTC 10195 / G37) (Mycoplasmoides genitalium).